Consider the following 362-residue polypeptide: N5-carboxyaminoimidazole ribonucleotide synthase (362 aa).

ATP contacts are provided by residues Arg-108, Lys-148, 153 to 159 (GYDGKGQ), 185 to 188 (EGFV), Glu-193, His-216, and 270 to 271 (NE). An ATP-grasp domain is found at 112–300 (KQFLNESGIE…QFEQHIRAVA (189 aa)).

It belongs to the PurK/PurT family. In terms of assembly, homodimer.

The enzyme catalyses 5-amino-1-(5-phospho-beta-D-ribosyl)imidazole + hydrogencarbonate + ATP = 5-carboxyamino-1-(5-phospho-D-ribosyl)imidazole + ADP + phosphate + 2 H(+). It participates in purine metabolism; IMP biosynthesis via de novo pathway; 5-amino-1-(5-phospho-D-ribosyl)imidazole-4-carboxylate from 5-amino-1-(5-phospho-D-ribosyl)imidazole (N5-CAIR route): step 1/2. In terms of biological role, catalyzes the ATP-dependent conversion of 5-aminoimidazole ribonucleotide (AIR) and HCO(3)(-) to N5-carboxyaminoimidazole ribonucleotide (N5-CAIR). The sequence is that of N5-carboxyaminoimidazole ribonucleotide synthase from Brucella melitensis biotype 1 (strain ATCC 23456 / CCUG 17765 / NCTC 10094 / 16M).